A 567-amino-acid polypeptide reads, in one-letter code: MKQSKVFIPTMRDVPSEAEAQSHRLLLKSGLIKQSTSGIYSYLPLATRVLNNITAIVRQEMERIDSVEILMPALQQAELWEESGRWGAYGPELMRLQDRHGRQFALGPTHEELVTSIVRNELKSYKQLPMTLFQIQSKFRDEKRPRFGLLRGREFIMKDAYSFHADEASLDQTYQDMYQAYSRIFERVGINARPVVADSGAIGGSHTHEFMALSAIGEDTIVYSKESDYAANIEKAEVVYEPNHKHSTVQPLEKIETPNVKTAQELADFLGRPVDEIVKTMIFKVDGEYIMVLVRGHHEINDIKLKSYFGTDNIELATQDEIVNLVGANPGSLGPVIDKEIKIYADNFVQDLNNLVVGANEDGYHLINVNVGRDFNVDEYGDFRFILEGEKLSDGSGVAHFAEGIEVGQVFKLGTKYSESMNATFLDNQGKAQPLIMGCYGIGISRTLSAIVEQNHDDNGIVWPKSVTPFDLHLISINPKKDDQRELADALYAEFNTKFDVLYDDRQERAGVKFNDADLIGLPLRIVVGKRASEGIVEVKERLTGDSEEVHIDDLMTVITNKYDNLK.

It belongs to the class-II aminoacyl-tRNA synthetase family. ProS type 1 subfamily. Homodimer.

The protein resides in the cytoplasm. The enzyme catalyses tRNA(Pro) + L-proline + ATP = L-prolyl-tRNA(Pro) + AMP + diphosphate. Catalyzes the attachment of proline to tRNA(Pro) in a two-step reaction: proline is first activated by ATP to form Pro-AMP and then transferred to the acceptor end of tRNA(Pro). As ProRS can inadvertently accommodate and process non-cognate amino acids such as alanine and cysteine, to avoid such errors it has two additional distinct editing activities against alanine. One activity is designated as 'pretransfer' editing and involves the tRNA(Pro)-independent hydrolysis of activated Ala-AMP. The other activity is designated 'posttransfer' editing and involves deacylation of mischarged Ala-tRNA(Pro). The misacylated Cys-tRNA(Pro) is not edited by ProRS. The protein is Proline--tRNA ligase of Staphylococcus aureus (strain Mu3 / ATCC 700698).